A 280-amino-acid chain; its full sequence is Bifunctional protein FolD (280 aa).

NADP(+) contacts are provided by residues 166–168 and S191; that span reads GRS.

The protein belongs to the tetrahydrofolate dehydrogenase/cyclohydrolase family. As to quaternary structure, homodimer.

The enzyme catalyses (6R)-5,10-methylene-5,6,7,8-tetrahydrofolate + NADP(+) = (6R)-5,10-methenyltetrahydrofolate + NADPH. It catalyses the reaction (6R)-5,10-methenyltetrahydrofolate + H2O = (6R)-10-formyltetrahydrofolate + H(+). It participates in one-carbon metabolism; tetrahydrofolate interconversion. In terms of biological role, catalyzes the oxidation of 5,10-methylenetetrahydrofolate to 5,10-methenyltetrahydrofolate and then the hydrolysis of 5,10-methenyltetrahydrofolate to 10-formyltetrahydrofolate. This is Bifunctional protein FolD from Marinomonas sp. (strain MWYL1).